A 206-amino-acid chain; its full sequence is Large ribosomal subunit protein bL9 (206 aa).

The tract at residues 182 to 206 is disordered; sequence FAENQQKALAKEMNDNDANSINEEA. The segment covering 197-206 has biased composition (polar residues); it reads NDANSINEEA.

The protein belongs to the bacterial ribosomal protein bL9 family.

Its function is as follows. Binds to the 23S rRNA. This is Large ribosomal subunit protein bL9 from Bartonella henselae (strain ATCC 49882 / DSM 28221 / CCUG 30454 / Houston 1) (Rochalimaea henselae).